Here is a 365-residue protein sequence, read N- to C-terminus: Alpha-keto acid-binding periplasmic protein TakP (365 aa).

Residues 1–26 (MDRRSFITKAAVGGAAASALAAPALA) constitute a signal peptide (tat-type signal). Residues 99–100 (YY), Gln-156, and Arg-177 each bind substrate. Gln-156 contacts Na(+). 3 residues coordinate Na(+): Glu-214, Trp-215, and Glu-240.

The protein belongs to the bacterial solute-binding protein 7 family. In terms of assembly, homodimer. The complex comprises the extracytoplasmic solute receptor protein TakP, and the two transmembrane proteins TakQ and TakM. Post-translationally, predicted to be exported by the Tat system. The position of the signal peptide cleavage has not been experimentally proven.

It is found in the periplasm. Part of the tripartite ATP-independent periplasmic (TRAP) transport system TakPQM involved in the uptake of alpha-keto acids. This protein specifically binds alpha-keto acids including pyruvate, oxobutyrate, oxovalerate and 4-methyl-2-oxovalerate. Ligand-binding affinity increases with the increasing chain length of the aliphatic backbone of the ligand. Is not able to bind alpha-ketoglutarate. The polypeptide is Alpha-keto acid-binding periplasmic protein TakP (Cereibacter sphaeroides (strain ATCC 17023 / DSM 158 / JCM 6121 / CCUG 31486 / LMG 2827 / NBRC 12203 / NCIMB 8253 / ATH 2.4.1.) (Rhodobacter sphaeroides)).